Reading from the N-terminus, the 285-residue chain is DNA repair protein RecO (285 aa).

It belongs to the RecO family.

Functionally, involved in DNA repair and RecF pathway recombination. The polypeptide is DNA repair protein RecO (Synechococcus sp. (strain JA-2-3B'a(2-13)) (Cyanobacteria bacterium Yellowstone B-Prime)).